We begin with the raw amino-acid sequence, 120 residues long: NAD(P)H-quinone oxidoreductase subunit 3, chloroplastic (120 aa).

The next 3 helical transmembrane spans lie at 7–27 (YDYF…IFSL), 64–84 (MFAL…PWAM), and 89–109 (FGIS…IGLV).

The protein belongs to the complex I subunit 3 family. In terms of assembly, NDH is composed of at least 16 different subunits, 5 of which are encoded in the nucleus.

Its subcellular location is the plastid. It is found in the chloroplast thylakoid membrane. The catalysed reaction is a plastoquinone + NADH + (n+1) H(+)(in) = a plastoquinol + NAD(+) + n H(+)(out). It carries out the reaction a plastoquinone + NADPH + (n+1) H(+)(in) = a plastoquinol + NADP(+) + n H(+)(out). In terms of biological role, NDH shuttles electrons from NAD(P)H:plastoquinone, via FMN and iron-sulfur (Fe-S) centers, to quinones in the photosynthetic chain and possibly in a chloroplast respiratory chain. The immediate electron acceptor for the enzyme in this species is believed to be plastoquinone. Couples the redox reaction to proton translocation, and thus conserves the redox energy in a proton gradient. This Marchantia polymorpha (Common liverwort) protein is NAD(P)H-quinone oxidoreductase subunit 3, chloroplastic.